A 407-amino-acid polypeptide reads, in one-letter code: Protein ZNF365 (407 aa).

The residue at position 16 (Ser16) is a Phosphoserine. The segment at 26–51 adopts a C2H2-type; degenerate zinc-finger fold; the sequence is FRCPRCGDHTRFRSLSSLRAHLEFSH. Residue Ser138 is modified to Phosphoserine. The stretch at 169–296 forms a coiled coil; the sequence is VEAVDRTIEK…KQLEYYQSQQ (128 aa). Residue Thr175 is modified to Phosphothreonine. The segment at 347-392 is disordered; sequence LKKAKDDRASMQPAKAIHEQAESSRDLCRPPKKGELLGFGRKGNIR. Basic and acidic residues predominate over residues 362 to 381; the sequence is AIHEQAESSRDLCRPPKKGE. Phosphoserine is present on Ser369.

In terms of assembly, homodimers. Interacts with NDE1 and NDEL1. Interacts with DISC1. Interacts with PARP1. Interacts with MCRS1.

It is found in the cytoplasm. The protein localises to the cytoskeleton. It localises to the microtubule organizing center. The protein resides in the centrosome. Its function is as follows. Involved in the regulation of neurogenesis. Negatively regulates neurite outgrowth. Involved in the morphogenesis of basket cells in the somatosensory cortex during embryogenesis. Involved in the positive regulation of oligodendrocyte differentiation during postnatal growth. Involved in dendritic arborization, morphogenesis of spine density dendrite, and establishment of postsynaptic dendrite density in cortical pyramidal neurons. Involved in homologous recombination (HR) repair pathway. Required for proper resolution of DNA double-strand breaks (DSBs) by HR. Is required for recovery of stalled replication forks, and directly contributes to genomic stability. Interacts with PARP1 and mediates MRE11-dependent DNA end resection during replication fork recovery. Contributes to genomic stability by preventing telomere dysfunction. This Pongo abelii (Sumatran orangutan) protein is Protein ZNF365 (ZNF365).